Here is an 883-residue protein sequence, read N- to C-terminus: Putative GTP diphosphokinase RSH1, chloroplastic (883 aa).

Residues 1 to 55 (MTSASSMSVSVECVNICNLTKGDGNARSDCSALSCAWKAPRALTGFLASTAHPPV) constitute a chloroplast transit peptide. Positions 172–279 (FIIHPVAVAR…VKLADRLHNM (108 aa)) constitute an HD domain. The 64-residue stretch at 562-625 (LGSRVFVFTP…ENAEVVEIVT (64 aa)) folds into the TGS domain. Over residues 710 to 726 (QSQDKSRDTTPAPQNGS) the composition is skewed to polar residues. The interval 710 to 746 (QSQDKSRDTTPAPQNGSVWAPKVNGKHNKAIKNSSSD) is disordered. Residues 796–867 (WLCVVSMDRK…LVLGVLGWSS (72 aa)) form the ACT domain.

It belongs to the RelA/SpoT family. In terms of assembly, interacts with RPP5.

It localises to the plastid. It is found in the chloroplast. The catalysed reaction is GTP + ATP = guanosine 3'-diphosphate 5'-triphosphate + AMP. Its function is as follows. May be involved in a rapid plant ppGpp (guanosine 3'-diphosphate 5'-diphosphate)-mediated response to pathogens and other stresses. The polypeptide is Putative GTP diphosphokinase RSH1, chloroplastic (RSH1) (Arabidopsis thaliana (Mouse-ear cress)).